We begin with the raw amino-acid sequence, 282 residues long: Bifunctional protein FolD (282 aa).

Residues 165 to 167 (GRS), S190, and T231 each bind NADP(+).

Belongs to the tetrahydrofolate dehydrogenase/cyclohydrolase family. As to quaternary structure, homodimer.

It carries out the reaction (6R)-5,10-methylene-5,6,7,8-tetrahydrofolate + NADP(+) = (6R)-5,10-methenyltetrahydrofolate + NADPH. The catalysed reaction is (6R)-5,10-methenyltetrahydrofolate + H2O = (6R)-10-formyltetrahydrofolate + H(+). Its pathway is one-carbon metabolism; tetrahydrofolate interconversion. Functionally, catalyzes the oxidation of 5,10-methylenetetrahydrofolate to 5,10-methenyltetrahydrofolate and then the hydrolysis of 5,10-methenyltetrahydrofolate to 10-formyltetrahydrofolate. This Clostridium beijerinckii (strain ATCC 51743 / NCIMB 8052) (Clostridium acetobutylicum) protein is Bifunctional protein FolD.